A 160-amino-acid polypeptide reads, in one-letter code: Cytochrome b6-f complex subunit 4 (160 aa).

3 helical membrane passes run 36–56 (LLYIFPVVIFGTFACVIGLSV), 95–115 (LLGVLLMAAVPAGLLTVPFIE), and 131–151 (TVFLIGTVAAIWLGIGAALPI).

Belongs to the cytochrome b family. PetD subfamily. As to quaternary structure, the 4 large subunits of the cytochrome b6-f complex are cytochrome b6, subunit IV (17 kDa polypeptide, petD), cytochrome f and the Rieske protein, while the 4 small subunits are petG, petL, petM and petN. The complex functions as a dimer.

It localises to the plastid. The protein resides in the chloroplast thylakoid membrane. In terms of biological role, component of the cytochrome b6-f complex, which mediates electron transfer between photosystem II (PSII) and photosystem I (PSI), cyclic electron flow around PSI, and state transitions. The polypeptide is Cytochrome b6-f complex subunit 4 (Chlorella vulgaris (Green alga)).